A 103-amino-acid polypeptide reads, in one-letter code: Large ribosomal subunit protein bL21 (103 aa).

The protein belongs to the bacterial ribosomal protein bL21 family. As to quaternary structure, part of the 50S ribosomal subunit. Contacts protein L20.

In terms of biological role, this protein binds to 23S rRNA in the presence of protein L20. In Clostridioides difficile (strain 630) (Peptoclostridium difficile), this protein is Large ribosomal subunit protein bL21.